The chain runs to 340 residues: Uroporphyrinogen decarboxylase (340 aa).

Substrate is bound by residues 23-27, Asp72, Tyr147, Thr202, and His316; that span reads RQAGR.

The protein belongs to the uroporphyrinogen decarboxylase family. Homodimer.

It localises to the cytoplasm. It carries out the reaction uroporphyrinogen III + 4 H(+) = coproporphyrinogen III + 4 CO2. Its pathway is porphyrin-containing compound metabolism; protoporphyrin-IX biosynthesis; coproporphyrinogen-III from 5-aminolevulinate: step 4/4. Catalyzes the decarboxylation of four acetate groups of uroporphyrinogen-III to yield coproporphyrinogen-III. This is Uroporphyrinogen decarboxylase from Geobacter metallireducens (strain ATCC 53774 / DSM 7210 / GS-15).